The sequence spans 113 residues: Protein translation factor SUI1 homolog 1 (113 aa).

The disordered stretch occupies residues Met-1–Gly-24. At Ser-2 the chain carries N-acetylserine.

It belongs to the SUI1 family.

Functionally, probably involved in translation. This Arabidopsis thaliana (Mouse-ear cress) protein is Protein translation factor SUI1 homolog 1.